Reading from the N-terminus, the 429-residue chain is 3-phosphoshikimate 1-carboxyvinyltransferase (429 aa).

3-phosphoshikimate-binding residues include Lys-25, Ser-26, and Arg-30. A phosphoenolpyruvate-binding site is contributed by Lys-25. Phosphoenolpyruvate is bound by residues Gly-99 and Arg-127. 3-phosphoshikimate-binding residues include Ser-173, Ser-174, Gln-175, Ser-201, Asp-317, Asn-340, and Lys-344. Gln-175 is a phosphoenolpyruvate binding site. Asp-317 acts as the Proton acceptor in catalysis. Residues Arg-348, Arg-390, and Lys-415 each coordinate phosphoenolpyruvate.

Belongs to the EPSP synthase family. In terms of assembly, monomer.

Its subcellular location is the cytoplasm. The catalysed reaction is 3-phosphoshikimate + phosphoenolpyruvate = 5-O-(1-carboxyvinyl)-3-phosphoshikimate + phosphate. It functions in the pathway metabolic intermediate biosynthesis; chorismate biosynthesis; chorismate from D-erythrose 4-phosphate and phosphoenolpyruvate: step 6/7. Functionally, catalyzes the transfer of the enolpyruvyl moiety of phosphoenolpyruvate (PEP) to the 5-hydroxyl of shikimate-3-phosphate (S3P) to produce enolpyruvyl shikimate-3-phosphate and inorganic phosphate. The chain is 3-phosphoshikimate 1-carboxyvinyltransferase from Pseudoalteromonas atlantica (strain T6c / ATCC BAA-1087).